We begin with the raw amino-acid sequence, 293 residues long: ATP synthase gamma chain (293 aa).

The protein belongs to the ATPase gamma chain family. In terms of assembly, F-type ATPases have 2 components, CF(1) - the catalytic core - and CF(0) - the membrane proton channel. CF(1) has five subunits: alpha(3), beta(3), gamma(1), delta(1), epsilon(1). CF(0) has three main subunits: a, b and c.

The protein resides in the cell membrane. Functionally, produces ATP from ADP in the presence of a proton gradient across the membrane. The gamma chain is believed to be important in regulating ATPase activity and the flow of protons through the CF(0) complex. The protein is ATP synthase gamma chain of Methylacidiphilum infernorum (isolate V4) (Methylokorus infernorum (strain V4)).